A 371-amino-acid chain; its full sequence is Collectin-46 (371 aa).

A signal peptide spans 1 to 20; that stretch reads MLLLPLSVLLLLTQPWRSLG. Positions 43-215 are disordered; it reads PEGGLPGRDG…ERGAKGESGL (173 aa). In terms of domain architecture, Collagen-like spans 46–216; the sequence is GLPGRDGQDG…RGAKGESGLA (171 aa). A compositionally biased stretch (basic and acidic residues) spans 51–65; sequence DGQDGREGPQGEKGD. N-linked (GlcNAc...) asparagine glycosylation is present at Asn-90. The segment covering 113–128 has biased composition (low complexity); sequence PAGREGPSGKQGSMGP. The span at 139–148 shows a compositional bias: gly residues; the sequence is GPKGGMGAPG. Residues 170 to 191 are compositionally biased toward low complexity; that stretch reads APGSAGVAGPAGAIGPQGPSGA. Over residues 198–210 the composition is skewed to basic and acidic residues; it reads KGDRGDPGERGAK. The short motif at 201–203 is the Cell attachment site element; it reads RGD. The region spanning 273–371 is the C-type lectin domain; that stretch reads QLCREAKGQL…SEPLLVICEF (99 aa). 2 disulfide bridges follow: Cys-275/Cys-369 and Cys-347/Cys-361.

The protein belongs to the SFTPD family. As to quaternary structure, oligomeric complex of 4 set of homotrimers. In terms of processing, hydroxylated. As to expression, highly expressed in thymus and liver.

It is found in the secreted. The chain is Collectin-46 (CL46) from Bos taurus (Bovine).